Consider the following 181-residue polypeptide: MDDSEEDQRLPHHREPKEFIPLDKLSELGILSWRLNADDWENDEKLKKIREARGYSYMDICDVCPEKLPNYEAKIKNFFEEHLRTDEEIRYCLEGSGYFDVRDENDQWIRVAVKKGGMIVLPAGMYHRFTLDTDNYIKAMRLFVGEPVWTPYNRPHDHLPARKEYVEKIINRGGNQAVEAR.

The protein belongs to the acireductone dioxygenase (ARD) family.

The protein resides in the cytoplasm. The protein localises to the nucleus. Probable inactive acireductone dioxygenase. This Sorghum bicolor (Sorghum) protein is Probable inactive acireductone dioxygenase 2.